The following is a 124-amino-acid chain: Large ribosomal subunit protein bL12 (124 aa).

It belongs to the bacterial ribosomal protein bL12 family. Homodimer. Part of the ribosomal stalk of the 50S ribosomal subunit. Forms a multimeric L10(L12)X complex, where L10 forms an elongated spine to which 2 to 4 L12 dimers bind in a sequential fashion. Binds GTP-bound translation factors.

Functionally, forms part of the ribosomal stalk which helps the ribosome interact with GTP-bound translation factors. Is thus essential for accurate translation. The chain is Large ribosomal subunit protein bL12 from Aromatoleum aromaticum (strain DSM 19018 / LMG 30748 / EbN1) (Azoarcus sp. (strain EbN1)).